Here is a 390-residue protein sequence, read N- to C-terminus: S-adenosylmethionine synthase 2 (390 aa).

Position 9 (glutamate 9) interacts with Mg(2+). Position 15 (histidine 15) interacts with ATP. Residue glutamate 43 coordinates K(+). L-methionine-binding residues include glutamate 56 and glutamine 99. Residues 167-169, 235-238, aspartate 246, 252-253, alanine 269, lysine 273, and lysine 277 contribute to the ATP site; these read DGK, SGRF, and RK. Aspartate 246 contacts L-methionine. Residue lysine 277 participates in L-methionine binding.

This sequence belongs to the AdoMet synthase family. In terms of assembly, homotetramer. The cofactor is Mn(2+). Mg(2+) serves as cofactor. It depends on Co(2+) as a cofactor. K(+) is required as a cofactor.

The protein localises to the cytoplasm. It carries out the reaction L-methionine + ATP + H2O = S-adenosyl-L-methionine + phosphate + diphosphate. The protein operates within amino-acid biosynthesis; S-adenosyl-L-methionine biosynthesis; S-adenosyl-L-methionine from L-methionine: step 1/1. Functionally, catalyzes the formation of S-adenosylmethionine from methionine and ATP. The reaction comprises two steps that are both catalyzed by the same enzyme: formation of S-adenosylmethionine (AdoMet) and triphosphate, and subsequent hydrolysis of the triphosphate. The polypeptide is S-adenosylmethionine synthase 2 (SAM2) (Petunia hybrida (Petunia)).